The sequence spans 391 residues: Alanine racemase (391 aa).

Residue K46 is the Proton acceptor; specific for D-alanine of the active site. K46 is modified (N6-(pyridoxal phosphate)lysine). R148 contributes to the substrate binding site. The Proton acceptor; specific for L-alanine role is filled by Y283. Substrate is bound at residue M331.

It belongs to the alanine racemase family. Pyridoxal 5'-phosphate is required as a cofactor.

It carries out the reaction L-alanine = D-alanine. It functions in the pathway amino-acid biosynthesis; D-alanine biosynthesis; D-alanine from L-alanine: step 1/1. Its function is as follows. Catalyzes the interconversion of L-alanine and D-alanine. May also act on other amino acids. This is Alanine racemase (alr) from Streptomyces coelicolor (strain ATCC BAA-471 / A3(2) / M145).